We begin with the raw amino-acid sequence, 611 residues long: Procollagen galactosyltransferase 1-A (611 aa).

Positions 1–24 (MSQAGVDRLLRGLQLLLLVLRLSA) are cleaved as a signal peptide. N-linked (GlcNAc...) asparagine glycosylation is found at asparagine 85, asparagine 173, asparagine 312, asparagine 370, and asparagine 568. Residues 575–591 (WDRAKSRKTQQQEKLRS) are compositionally biased toward basic and acidic residues. A disordered region spans residues 575–611 (WDRAKSRKTQQQEKLRSEALNSPSLGSPFDNTARDEL). The Prevents secretion from ER motif lies at 608-611 (RDEL).

It belongs to the glycosyltransferase 25 family.

The protein localises to the endoplasmic reticulum lumen. It catalyses the reaction (5R)-5-hydroxy-L-lysyl-[collagen] + UDP-alpha-D-galactose = (5R)-5-O-(beta-D-galactosyl)-5-hydroxy-L-lysyl-[collagen] + UDP + H(+). In terms of biological role, beta-galactosyltransferase that transfers beta-galactose to hydroxylysine residues of type I collagen. By acting on collagen glycosylation, facilitates the formation of collagen triple helix. This Xenopus laevis (African clawed frog) protein is Procollagen galactosyltransferase 1-A (colgalt1-a).